The primary structure comprises 289 residues: Cbb3-type cytochrome c oxidase subunit FixP (289 aa).

Over 1–33 (MADKHKHVDEVSGVETTGHEWDGIRELNNPMPR) the chain is Cytoplasmic. Residues 34–56 (WWVYSFYATIIWAIGYAIAYPSW) form a helical membrane-spanning segment. The Periplasmic segment spans residues 57–289 (PMLTEATKGM…VFVHSLGGGE (233 aa)). Cytochrome c domains are found at residues 110 to 198 (FAVS…VSLT) and 205 to 286 (HLVQ…HSLG). Heme c is bound by residues cysteine 123, cysteine 126, histidine 127, methionine 175, cysteine 218, cysteine 221, histidine 222, and methionine 263.

Belongs to the CcoP / FixP family. As to quaternary structure, component of the cbb3-type cytochrome c oxidase at least composed of FixN, FixO, FixQ and FixP. Heme c is required as a cofactor.

The protein resides in the cell inner membrane. It participates in energy metabolism; oxidative phosphorylation. Functionally, C-type cytochrome. Part of the cbb3-type cytochrome c oxidase complex. FixP subunit is required for transferring electrons from donor cytochrome c via its heme groups to FixO subunit. From there, electrons are shuttled to the catalytic binuclear center of FixN subunit where oxygen reduction takes place. The complex also functions as a proton pump. The sequence is that of Cbb3-type cytochrome c oxidase subunit FixP from Rhizobium meliloti (strain 1021) (Ensifer meliloti).